The following is a 456-amino-acid chain: uncharacterized protein (456 aa).

The protein belongs to the herpesviridae UL49 family.

This is an uncharacterized protein from Equus caballus (Horse).